A 254-amino-acid chain; its full sequence is 5-oxoprolinase subunit A (254 aa).

This sequence belongs to the LamB/PxpA family. As to quaternary structure, forms a complex composed of PxpA, PxpB and PxpC.

It catalyses the reaction 5-oxo-L-proline + ATP + 2 H2O = L-glutamate + ADP + phosphate + H(+). Functionally, catalyzes the cleavage of 5-oxoproline to form L-glutamate coupled to the hydrolysis of ATP to ADP and inorganic phosphate. The chain is 5-oxoprolinase subunit A from Brevibacillus brevis (strain 47 / JCM 6285 / NBRC 100599).